Consider the following 328-residue polypeptide: Aspartate carbamoyltransferase catalytic subunit (328 aa).

Carbamoyl phosphate contacts are provided by arginine 64 and threonine 65. Lysine 92 contributes to the L-aspartate binding site. 3 residues coordinate carbamoyl phosphate: arginine 114, histidine 144, and glutamine 147. L-aspartate-binding residues include arginine 177 and arginine 232. Residues glycine 273 and proline 274 each coordinate carbamoyl phosphate.

This sequence belongs to the aspartate/ornithine carbamoyltransferase superfamily. ATCase family. In terms of assembly, heterododecamer (2C3:3R2) of six catalytic PyrB chains organized as two trimers (C3), and six regulatory PyrI chains organized as three dimers (R2).

The catalysed reaction is carbamoyl phosphate + L-aspartate = N-carbamoyl-L-aspartate + phosphate + H(+). It participates in pyrimidine metabolism; UMP biosynthesis via de novo pathway; (S)-dihydroorotate from bicarbonate: step 2/3. Functionally, catalyzes the condensation of carbamoyl phosphate and aspartate to form carbamoyl aspartate and inorganic phosphate, the committed step in the de novo pyrimidine nucleotide biosynthesis pathway. This is Aspartate carbamoyltransferase catalytic subunit from Halorhodospira halophila (strain DSM 244 / SL1) (Ectothiorhodospira halophila (strain DSM 244 / SL1)).